A 290-amino-acid polypeptide reads, in one-letter code: Syntaxin-1A (290 aa).

The tract at residues 1–21 (MTKDRLAALQAAQSDDEDMPE) is disordered. The Cytoplasmic segment spans residues 1–267 (MTKDRLAALQ…KYQSKARRKK (267 aa)). Residues 194-256 (LADIEARHAD…QTATQDTKKA (63 aa)) form the t-SNARE coiled-coil homology domain. A helical; Anchor for type IV membrane protein transmembrane segment spans residues 268 to 289 (IWIAICVLIAIIILVVFLAIYL). Threonine 290 is a topological domain (vesicular).

It belongs to the syntaxin family. (Microbial infection) Targeted and hydrolyzed by the light chain (LC) of P.bifermentans PMP1. Cleavage probably inhibits neurotransmitter release.

It is found in the cytoplasmic vesicle. It localises to the secretory vesicle. The protein localises to the synaptic vesicle membrane. Plays a critical role in several secretory processes. This is Syntaxin-1A from Anopheles gambiae (African malaria mosquito).